Here is an 887-residue protein sequence, read N- to C-terminus: Valine--tRNA ligase (887 aa).

The 'HIGH' region signature appears at 48–58; that stretch reads PNVTGVLHVGH. The short motif at 527–531 is the 'KMSKS' region element; the sequence is KMSKS. Lysine 530 lines the ATP pocket. A coiled-coil region spans residues 814 to 887; sequence LAGLVDIEAE…EASDRLKKLS (74 aa).

The protein belongs to the class-I aminoacyl-tRNA synthetase family. ValS type 1 subfamily. Monomer.

The protein localises to the cytoplasm. It carries out the reaction tRNA(Val) + L-valine + ATP = L-valyl-tRNA(Val) + AMP + diphosphate. Catalyzes the attachment of valine to tRNA(Val). As ValRS can inadvertently accommodate and process structurally similar amino acids such as threonine, to avoid such errors, it has a 'posttransfer' editing activity that hydrolyzes mischarged Thr-tRNA(Val) in a tRNA-dependent manner. In Desulfotalea psychrophila (strain LSv54 / DSM 12343), this protein is Valine--tRNA ligase.